Here is a 144-residue protein sequence, read N- to C-terminus: Large ribosomal subunit protein uL15 (144 aa).

Residues 1–52 (MYLNTISPMKKSNHSSKRKGRGIGSGKGKTSGRGHKGQRSRSGGKVRRGFEG) form a disordered region. 2 stretches are compositionally biased toward basic residues: residues 11–21 (KSNHSSKRKGR) and 30–47 (TSGRGHKGQRSRSGGKVR).

Belongs to the universal ribosomal protein uL15 family. As to quaternary structure, part of the 50S ribosomal subunit.

In terms of biological role, binds to the 23S rRNA. The chain is Large ribosomal subunit protein uL15 from Wigglesworthia glossinidia brevipalpis.